The primary structure comprises 321 residues: Ribosomal RNA small subunit methyltransferase H (321 aa).

Residues 40–42 (GGH), aspartate 60, phenylalanine 84, aspartate 106, and glutamine 113 each bind S-adenosyl-L-methionine.

It belongs to the methyltransferase superfamily. RsmH family.

Its subcellular location is the cytoplasm. The enzyme catalyses cytidine(1402) in 16S rRNA + S-adenosyl-L-methionine = N(4)-methylcytidine(1402) in 16S rRNA + S-adenosyl-L-homocysteine + H(+). Functionally, specifically methylates the N4 position of cytidine in position 1402 (C1402) of 16S rRNA. This Haemophilus influenzae (strain ATCC 51907 / DSM 11121 / KW20 / Rd) protein is Ribosomal RNA small subunit methyltransferase H.